The chain runs to 446 residues: Tubulin beta chain (446 aa).

GTP is bound by residues Q11, E69, S138, G142, T143, G144, N204, and N226. E69 lines the Mg(2+) pocket. The segment at 421-446 (EYQQYQDAGIDEEEEEYEEELPEGEE) is disordered. Over residues 429-446 (GIDEEEEEYEEELPEGEE) the composition is skewed to acidic residues.

This sequence belongs to the tubulin family. In terms of assembly, dimer of alpha and beta chains. A typical microtubule is a hollow water-filled tube with an outer diameter of 25 nm and an inner diameter of 15 nM. Alpha-beta heterodimers associate head-to-tail to form protofilaments running lengthwise along the microtubule wall with the beta-tubulin subunit facing the microtubule plus end conferring a structural polarity. Microtubules usually have 13 protofilaments but different protofilament numbers can be found in some organisms and specialized cells. The cofactor is Mg(2+).

It is found in the cytoplasm. Its subcellular location is the cytoskeleton. Functionally, tubulin is the major constituent of microtubules, a cylinder consisting of laterally associated linear protofilaments composed of alpha- and beta-tubulin heterodimers. Microtubules grow by the addition of GTP-tubulin dimers to the microtubule end, where a stabilizing cap forms. Below the cap, tubulin dimers are in GDP-bound state, owing to GTPase activity of alpha-tubulin. In Fusarium fujikuroi (Bakanae and foot rot disease fungus), this protein is Tubulin beta chain (TUB2).